The chain runs to 221 residues: uncharacterized protein (221 aa).

This is an uncharacterized protein from Treponema pallidum (strain Nichols).